The sequence spans 123 residues: Large ribosomal subunit protein bL12 (123 aa).

It belongs to the bacterial ribosomal protein bL12 family. In terms of assembly, homodimer. Part of the ribosomal stalk of the 50S ribosomal subunit. Forms a multimeric L10(L12)X complex, where L10 forms an elongated spine to which 2 to 4 L12 dimers bind in a sequential fashion. Binds GTP-bound translation factors.

Functionally, forms part of the ribosomal stalk which helps the ribosome interact with GTP-bound translation factors. Is thus essential for accurate translation. This Marinomonas sp. (strain MWYL1) protein is Large ribosomal subunit protein bL12.